A 252-amino-acid polypeptide reads, in one-letter code: 5-oxoprolinase subunit A (252 aa).

Belongs to the LamB/PxpA family. In terms of assembly, forms a complex composed of PxpA, PxpB and PxpC.

It carries out the reaction 5-oxo-L-proline + ATP + 2 H2O = L-glutamate + ADP + phosphate + H(+). Its function is as follows. Catalyzes the cleavage of 5-oxoproline to form L-glutamate coupled to the hydrolysis of ATP to ADP and inorganic phosphate. The protein is 5-oxoprolinase subunit A of Mycobacterium marinum (strain ATCC BAA-535 / M).